We begin with the raw amino-acid sequence, 234 residues long: MYASNLLYLLALWNLWDLSGGQQDIPNGKATLPSPQTPQNTIDQIGINQNYWFTYNALKQNETLAIIDTMEMRIASSLLEFKAQMEIQLQPLKIIMRHHASNIKASNNIKMRRFEKVGSRHFHIEKNLMQTWFEAYVTCRKMNGHLANIQDEMELDGILALAPNNSYWIDISKLVENGGTFVSTLTGREPFFVKWKSNQDTKKKNQCVYIYAKEMSYDECFEKKSFVCQADQWA.

A signal peptide spans 1–21; it reads MYASNLLYLLALWNLWDLSGG. Residues asparagine 61 and asparagine 164 are each glycosylated (N-linked (GlcNAc...) asparagine). A C-type lectin domain is found at 137–234; that stretch reads VTCRKMNGHL…SFVCQADQWA (98 aa). Intrachain disulfides connect cysteine 139–cysteine 228 and cysteine 207–cysteine 220.

In terms of tissue distribution, main cells of the accessory gland and in seminal fluid.

Its subcellular location is the secreted. Its function is as follows. Responsible for physiological and behavioral changes in mated female flies. The polypeptide is Accessory gland protein Acp29AB (Acp29AB) (Drosophila melanogaster (Fruit fly)).